The sequence spans 479 residues: Acyltransferase easC (479 aa).

His161 serves as the catalytic Proton acceptor.

This sequence belongs to the plant acyltransferase family. In terms of assembly, monomer.

It functions in the pathway antibiotic biosynthesis. In terms of biological role, acyltransferase; part of the gene cluster that mediates the biosynthesis of emericellamides, secondary metabolites acting as antibiotics. The biosynthesis of emericellamides initiates from the highly reducing polyketide synthase easB which catalyzes the formation of the linear polyketide chain. EasB produces several polyketides that can be further processed by the downstream enzymes. The polyketides are released from easB as linear polyketide carboxylic acids, which are converted to CoA thioesters by the acyl-CoA ligase easD. The substrates are then loaded onto the acyltransferase easC, which shuttles them to the first thiolation (T) domain of the nonribosomal peptide synthetase easA. EasA then performs condensation of the polyketides with one glycine, two alanine, one valine and one leucine residues. A last step of cyclization leads to the production of emericellamides. The protein is Acyltransferase easC of Emericella nidulans (strain FGSC A4 / ATCC 38163 / CBS 112.46 / NRRL 194 / M139) (Aspergillus nidulans).